Here is a 418-residue protein sequence, read N- to C-terminus: Glutamyl-tRNA reductase (418 aa).

Substrate is bound by residues 51–54 (TCNR), Ser107, 112–114 (EPQ), and Gln118. Residue Cys52 is the Nucleophile of the active site. 187-192 (GAGETA) contributes to the NADP(+) binding site.

Belongs to the glutamyl-tRNA reductase family. Homodimer.

The enzyme catalyses (S)-4-amino-5-oxopentanoate + tRNA(Glu) + NADP(+) = L-glutamyl-tRNA(Glu) + NADPH + H(+). The protein operates within porphyrin-containing compound metabolism; protoporphyrin-IX biosynthesis; 5-aminolevulinate from L-glutamyl-tRNA(Glu): step 1/2. Its function is as follows. Catalyzes the NADPH-dependent reduction of glutamyl-tRNA(Glu) to glutamate 1-semialdehyde (GSA). This chain is Glutamyl-tRNA reductase, found in Dichelobacter nodosus (strain VCS1703A).